Consider the following 65-residue polypeptide: Large ribosomal subunit protein bL35 (65 aa).

The disordered stretch occupies residues methionine 1–leucine 65. Positions alanine 10–leucine 44 are enriched in basic residues. Residues valine 50–leucine 65 show a composition bias toward basic and acidic residues.

This sequence belongs to the bacterial ribosomal protein bL35 family.

The protein is Large ribosomal subunit protein bL35 of Xylella fastidiosa (strain M12).